Here is a 459-residue protein sequence, read N- to C-terminus: Cysteine--tRNA ligase (459 aa).

Cys28 lines the Zn(2+) pocket. Positions 30 to 40 match the 'HIGH' region motif; sequence VTIYDLCHIGH. Cys209, His234, and Glu238 together coordinate Zn(2+). The short motif at 266–270 is the 'KMSKS' region element; sequence KMSKS. Lys269 serves as a coordination point for ATP.

The protein belongs to the class-I aminoacyl-tRNA synthetase family. In terms of assembly, monomer. It depends on Zn(2+) as a cofactor.

It is found in the cytoplasm. The catalysed reaction is tRNA(Cys) + L-cysteine + ATP = L-cysteinyl-tRNA(Cys) + AMP + diphosphate. The protein is Cysteine--tRNA ligase of Shewanella loihica (strain ATCC BAA-1088 / PV-4).